Reading from the N-terminus, the 284-residue chain is D-tagatose-1,6-bisphosphate aldolase subunit GatY (284 aa).

D82 serves as the catalytic Proton donor. Positions 83 and 180 each coordinate Zn(2+). G181 is a binding site for dihydroxyacetone phosphate. A Zn(2+)-binding site is contributed by H208. Residues 209-211 (GAS) and 230-233 (NVAT) contribute to the dihydroxyacetone phosphate site.

Belongs to the class II fructose-bisphosphate aldolase family. TagBP aldolase GatY subfamily. Forms a complex with GatZ. It depends on Zn(2+) as a cofactor.

It catalyses the reaction D-tagatofuranose 1,6-bisphosphate = D-glyceraldehyde 3-phosphate + dihydroxyacetone phosphate. It participates in carbohydrate metabolism; D-tagatose 6-phosphate degradation; D-glyceraldehyde 3-phosphate and glycerone phosphate from D-tagatose 6-phosphate: step 2/2. Its function is as follows. Catalytic subunit of the tagatose-1,6-bisphosphate aldolase GatYZ, which catalyzes the reversible aldol condensation of dihydroxyacetone phosphate (DHAP or glycerone-phosphate) with glyceraldehyde 3-phosphate (G3P) to produce tagatose 1,6-bisphosphate (TBP). Requires GatZ subunit for full activity and stability. Is involved in the catabolism of galactitol. In Escherichia coli (strain SMS-3-5 / SECEC), this protein is D-tagatose-1,6-bisphosphate aldolase subunit GatY.